The primary structure comprises 485 residues: Glutamate--tRNA ligase (485 aa).

The 'HIGH' region motif lies at 11–21 (PSPTGHLHIGN). The 'KMSKS' region motif lies at 252–256 (KLSKR). K255 contacts ATP.

The protein belongs to the class-I aminoacyl-tRNA synthetase family. Glutamate--tRNA ligase type 1 subfamily. As to quaternary structure, monomer.

The protein resides in the cytoplasm. It catalyses the reaction tRNA(Glu) + L-glutamate + ATP = L-glutamyl-tRNA(Glu) + AMP + diphosphate. Functionally, catalyzes the attachment of glutamate to tRNA(Glu) in a two-step reaction: glutamate is first activated by ATP to form Glu-AMP and then transferred to the acceptor end of tRNA(Glu). The polypeptide is Glutamate--tRNA ligase (Bacillus cereus (strain ATCC 10987 / NRS 248)).